Reading from the N-terminus, the 260-residue chain is Isopentenyl phosphate kinase (260 aa).

6–10 serves as a coordination point for ATP; that stretch reads KLGGS. Position 55 (glycine 55) interacts with substrate. Glycine 56 is an ATP binding site. Residues histidine 60 and glycine 159 each coordinate substrate. ATP-binding residues include aspartate 180, glycine 217, and lysine 221.

It belongs to the isopentenyl phosphate kinase family. In terms of assembly, homodimer.

It carries out the reaction isopentenyl phosphate + ATP = isopentenyl diphosphate + ADP. Catalyzes the formation of isopentenyl diphosphate (IPP), the building block of all isoprenoids. Has no activity with farnesyl phosphate. The protein is Isopentenyl phosphate kinase of Methanocaldococcus jannaschii (strain ATCC 43067 / DSM 2661 / JAL-1 / JCM 10045 / NBRC 100440) (Methanococcus jannaschii).